A 147-amino-acid polypeptide reads, in one-letter code: Hemoglobin subunit beta (147 aa).

Val-2 is modified (N-acetylvaline). A Globin domain is found at 3–147 (HLTGEEKAAV…VANALAHKYH (145 aa)). Phosphothreonine is present on Thr-13. The residue at position 45 (Ser-45) is a Phosphoserine. Lys-60 carries the post-translational modification N6-acetyllysine. His-64 serves as a coordination point for heme b. The residue at position 83 (Lys-83) is an N6-acetyllysine. His-93 lines the heme b pocket. An S-nitrosocysteine modification is found at Cys-94. Position 145 is an N6-acetyllysine (Lys-145).

It belongs to the globin family. As to quaternary structure, heterotetramer of two alpha chains and two beta chains. Red blood cells.

Its function is as follows. Involved in oxygen transport from the lung to the various peripheral tissues. In Cheracebus torquatus (Collared titi monkey), this protein is Hemoglobin subunit beta (HBB).